Here is a 261-residue protein sequence, read N- to C-terminus: Small ribosomal subunit protein uS2 (261 aa).

Residues Gly-222–Glu-261 are disordered. 2 stretches are compositionally biased toward acidic residues: residues Gly-230–Ser-239 and Glu-248–Glu-261.

Belongs to the universal ribosomal protein uS2 family.

This Campylobacter lari (strain RM2100 / D67 / ATCC BAA-1060) protein is Small ribosomal subunit protein uS2.